The sequence spans 327 residues: Flotillin-like protein FloA (327 aa).

A helical membrane pass occupies residues 2 to 22 (IGLIIIVVIVLVALLLLFSFV). A disordered region spans residues 305–327 (ADTGMRNSINQRTNQKDDESPDK). The segment covering 318-327 (NQKDDESPDK) has biased composition (basic and acidic residues).

It belongs to the flotillin-like FloA family. In terms of assembly, homooligomerizes.

The protein localises to the cell membrane. Its subcellular location is the membrane raft. Its function is as follows. Found in functional membrane microdomains (FMM) that may be equivalent to eukaryotic membrane rafts. FMMs are highly dynamic and increase in number as cells age. Flotillins are thought to be important factors in membrane fluidity. The chain is Flotillin-like protein FloA from Staphylococcus saprophyticus subsp. saprophyticus (strain ATCC 15305 / DSM 20229 / NCIMB 8711 / NCTC 7292 / S-41).